We begin with the raw amino-acid sequence, 696 residues long: Methionine synthase reductase (696 aa).

The Flavodoxin-like domain occupies 4 to 147 (FLLLYATQRG…VVEPWIDGLW (144 aa)). Residues 10–14 (TQRGQ) and 93–124 (LLGLGDSEYTYFCNGGKVIDKRLQELGAQRFY) each bind FMN. The segment at 166 to 245 (TLSRASDAPL…SSLSIPAVPP (80 aa)) is hinge. A phosphoserine mark is found at S171 and S188. Residues 269–531 (DPSFQVPISK…PRATNAFHLP (263 aa)) form the FAD-binding FR-type domain. K289 provides a ligand contact to NADP(+). FAD-binding positions include 449 to 452 (RPYS) and 485 to 488 (GVCT). NADP(+)-binding positions include 608 to 609 (SR), 622 to 624 (YVQ), and D657. W695 lines the FAD pocket.

In terms of assembly, forms a multiprotein complex with MMACHC, MMADHC and MTR. It depends on FAD as a cofactor. FMN is required as a cofactor.

It is found in the cytoplasm. It carries out the reaction 2 methylcob(III)alamin-[methionine synthase] + 2 S-adenosyl-L-homocysteine + NADP(+) + H(+) = 2 cob(II)alamin-[methionine synthase] + 2 S-adenosyl-L-methionine + NADPH. It catalyses the reaction 2 cob(II)alamin + A + 2 H2O + 2 H(+) = 2 aquacob(III)alamin + AH2. Functionally, key enzyme in methionine and folate homeostasis responsible for the reactivation of methionine synthase (MTR/MS) activity by catalyzing the reductive methylation of MTR-bound cob(II)alamin. Cobalamin (vitamin B12) forms a complex with MTR to serve as an intermediary in methyl transfer reactions that cycles between MTR-bound methylcob(III)alamin and MTR bound-cob(I)alamin forms, and occasional oxidative escape of the cob(I)alamin intermediate during the catalytic cycle leads to the inactive cob(II)alamin species. The processing of cobalamin in the cytosol occurs in a multiprotein complex composed of at least MMACHC, MMADHC, MTRR and MTR which may contribute to shuttle safely and efficiently cobalamin towards MTR in order to produce methionine. Also necessary for the utilization of methyl groups from the folate cycle, thereby affecting transgenerational epigenetic inheritance. Also acts as a molecular chaperone for methionine synthase by stabilizing apoMTR and incorporating methylcob(III)alamin into apoMTR to form the holoenzyme. Also serves as an aquacob(III)alamin reductase by reducing aquacob(III)alamin to cob(II)alamin; this reduction leads to stimulation of the conversion of apoMTR and aquacob(III)alamin to MTR holoenzyme. The sequence is that of Methionine synthase reductase from Mus musculus (Mouse).